Here is a 462-residue protein sequence, read N- to C-terminus: Histidine--tRNA ligase (462 aa).

The protein belongs to the class-II aminoacyl-tRNA synthetase family. Homodimer.

The protein localises to the cytoplasm. The catalysed reaction is tRNA(His) + L-histidine + ATP = L-histidyl-tRNA(His) + AMP + diphosphate + H(+). The chain is Histidine--tRNA ligase (hisS) from Nostoc sp. (strain PCC 7120 / SAG 25.82 / UTEX 2576).